Here is a 635-residue protein sequence, read N- to C-terminus: 1-deoxy-D-xylulose-5-phosphate synthase (635 aa).

Residues His-77 and 118-120 contribute to the thiamine diphosphate site; that span reads GHA. Asp-149 provides a ligand contact to Mg(2+). Thiamine diphosphate-binding positions include 150-151, Asn-178, Phe-290, and Glu-375; that span reads GS. Asn-178 contributes to the Mg(2+) binding site.

This sequence belongs to the transketolase family. DXPS subfamily. Homodimer. Mg(2+) serves as cofactor. The cofactor is thiamine diphosphate.

The enzyme catalyses D-glyceraldehyde 3-phosphate + pyruvate + H(+) = 1-deoxy-D-xylulose 5-phosphate + CO2. The protein operates within metabolic intermediate biosynthesis; 1-deoxy-D-xylulose 5-phosphate biosynthesis; 1-deoxy-D-xylulose 5-phosphate from D-glyceraldehyde 3-phosphate and pyruvate: step 1/1. Its function is as follows. Catalyzes the acyloin condensation reaction between C atoms 2 and 3 of pyruvate and glyceraldehyde 3-phosphate to yield 1-deoxy-D-xylulose-5-phosphate (DXP). In Chlorobium phaeovibrioides (strain DSM 265 / 1930) (Prosthecochloris vibrioformis (strain DSM 265)), this protein is 1-deoxy-D-xylulose-5-phosphate synthase.